A 388-amino-acid chain; its full sequence is Chorismate synthase (388 aa).

NADP(+) is bound by residues Arg39 and Arg45. FMN is bound by residues 130 to 132 (RSS), 251 to 252 (NA), Gly296, 311 to 315 (KPIPT), and Arg337.

Belongs to the chorismate synthase family. In terms of assembly, homotetramer. The cofactor is FMNH2.

The catalysed reaction is 5-O-(1-carboxyvinyl)-3-phosphoshikimate = chorismate + phosphate. It participates in metabolic intermediate biosynthesis; chorismate biosynthesis; chorismate from D-erythrose 4-phosphate and phosphoenolpyruvate: step 7/7. Its function is as follows. Catalyzes the anti-1,4-elimination of the C-3 phosphate and the C-6 proR hydrogen from 5-enolpyruvylshikimate-3-phosphate (EPSP) to yield chorismate, which is the branch point compound that serves as the starting substrate for the three terminal pathways of aromatic amino acid biosynthesis. This reaction introduces a second double bond into the aromatic ring system. This Streptococcus pyogenes serotype M49 (strain NZ131) protein is Chorismate synthase.